A 499-amino-acid polypeptide reads, in one-letter code: Diacylglycerol kinase 1 (499 aa).

The DAGKc domain maps to 41–194 (APCCPVVVFI…IDSWHIIMRM (154 aa)). Positions 442–479 (PCKSKSVNDPSSPMCCSNHDDDERNSLEDEDEWEEGRK) are disordered. Residues 446-456 (KSVNDPSSPMC) are compositionally biased toward polar residues. Residues 459–468 (NHDDDERNSL) show a composition bias toward basic and acidic residues.

The protein belongs to the eukaryotic diacylglycerol kinase family. As to quaternary structure, monomer. Highly expressed in roots.

It catalyses the reaction a 1,2-diacyl-sn-glycerol + ATP = a 1,2-diacyl-sn-glycero-3-phosphate + ADP + H(+). Its function is as follows. Phosphorylates the second messenger diacylglycerol (DAG) to generate phosphatidic acid (PA), another important signaling molecule. PA is required for plant development and responses to abiotic stress. May play a role in disease resistance responses to pathogen attack. Modulates root architecture by regulating the ratio of DAG and PA, which have opposite effect on the promotion or suppression of lateral roots vs seminal roots. Suppresses lateral root number, but promotes seminal root and crown root thickness. The protein is Diacylglycerol kinase 1 of Oryza sativa subsp. japonica (Rice).